The sequence spans 637 residues: MSDGETLADVRIVLIGDEGCGKTSLVMSLLEDEWVDAVPRRLDRVLIPADVTPENVTTSIVDLSIKEEEDNWLISEMRQANVICVVYSVTDDTTVERIQEKWLPLIRQAFGEYHETPIILVGNKSDGTANNTDKLPSGQSLVSSLQILPIMEANTEVETCVECSARTMKNVSEIFYYAQKAVIYPTRPLYDADTKQLTDRAKKALIRVFKICDRDNDGYLSDTELNDFQKLCFGIPLTSTALEDVKRAVADGCPDGVASDALMLAGFLYLHLLFIERGRHETTWAVLRKFGYETSLKLAEEYLYPRITIPVGCSTELSPEGVQFVSALFEKYDEDKDGCLSPSELQNLFSVCSAPVITKDNILALETNQRGWLTYNGYMAYWNMTTLINLTQTFEQLAYLGFPVGRSGPGRAGNTLDSIRVTRERKKDLENHGTDRKVFQCLVVGAKDAGKTVFMQSLAGRGMSDVAQIGRRHSPFVINRVKVKEESKYLLLREVDVLSPQDALGSGETSADVVAFLYDVSNPDSFAFCATVYQKYFYRTKTPCVMIATKVEREEVDQRWEIPPEEFCKQFELPKPIKFSSSNIGQSNSPIFEQLAMMAVYPHLRRVFYLSDSNLLSKITFGAAIVALAGFLVLKNL.

Topologically, residues 1 to 613 (MSDGETLADV…LRRVFYLSDS (613 aa)) are cytoplasmic. In terms of domain architecture, Miro 1 spans 7–184 (LADVRIVLIG…FYYAQKAVIY (178 aa)). GTP contacts are provided by residues 28–35 (SLLEDEWV), 74–78 (ISEMR), and 135–138 (LPSG). 2 consecutive EF-hand domains span residues 200–235 (RAKKALIRVFKICDRDNDGYLSDTELNDFQKLCFGI) and 320–355 (EGVQFVSALFEKYDEDKDGCLSPSELQNLFSVCSAP). The Ca(2+) site is built by Asp213, Asp215, Asp217, Tyr219, Glu224, Asp333, Asp335, Asp337, Cys339, and Glu344. The Miro 2 domain occupies 436 to 601 (RKVFQCLVVG…FEQLAMMAVY (166 aa)). Residues 445-452 (GAKDAGKT), 482-486 (KVKEE), and 549-552 (TKVE) each bind GTP. A helical; Anchor for type IV membrane protein transmembrane segment spans residues 614–634 (NLLSKITFGAAIVALAGFLVL). Residues 635-637 (KNL) are Mitochondrial intermembrane-facing.

It belongs to the mitochondrial Rho GTPase family.

The protein resides in the mitochondrion outer membrane. Mitochondrial GTPase involved in mitochondrial trafficking. Probably involved in control of anterograde transport of mitochondria and their subcellular distribution. The sequence is that of Mitochondrial Rho GTPase 1 from Caenorhabditis briggsae.